A 236-amino-acid polypeptide reads, in one-letter code: Glucosamine-6-phosphate deaminase (236 aa).

D62 (proton acceptor; for enolization step) is an active-site residue. The active-site For ring-opening step is the N128. H130 functions as the Proton acceptor; for ring-opening step in the catalytic mechanism. E135 serves as the catalytic For ring-opening step.

This sequence belongs to the glucosamine/galactosamine-6-phosphate isomerase family. NagB subfamily.

It carries out the reaction alpha-D-glucosamine 6-phosphate + H2O = beta-D-fructose 6-phosphate + NH4(+). It participates in amino-sugar metabolism; N-acetylneuraminate degradation; D-fructose 6-phosphate from N-acetylneuraminate: step 5/5. Catalyzes the reversible isomerization-deamination of glucosamine 6-phosphate (GlcN6P) to form fructose 6-phosphate (Fru6P) and ammonium ion. This chain is Glucosamine-6-phosphate deaminase, found in Lacticaseibacillus paracasei (strain ATCC 334 / BCRC 17002 / CCUG 31169 / CIP 107868 / KCTC 3260 / NRRL B-441) (Lactobacillus paracasei).